A 344-amino-acid chain; its full sequence is Probable dual-specificity RNA methyltransferase RlmN (344 aa).

The active-site Proton acceptor is glutamate 90. A Radical SAM core domain is found at 96–326; the sequence is YKYGNAICIS…VTIRRELGSS (231 aa). Cysteine 103 and cysteine 331 form a disulfide bridge. [4Fe-4S] cluster contacts are provided by cysteine 110, cysteine 114, and cysteine 117. Residues 157 to 158, serine 189, 212 to 214, and asparagine 288 contribute to the S-adenosyl-L-methionine site; these read GE and SLH. Cysteine 331 (S-methylcysteine intermediate) is an active-site residue.

The protein belongs to the radical SAM superfamily. RlmN family. [4Fe-4S] cluster is required as a cofactor.

The protein resides in the cytoplasm. The catalysed reaction is adenosine(2503) in 23S rRNA + 2 reduced [2Fe-2S]-[ferredoxin] + 2 S-adenosyl-L-methionine = 2-methyladenosine(2503) in 23S rRNA + 5'-deoxyadenosine + L-methionine + 2 oxidized [2Fe-2S]-[ferredoxin] + S-adenosyl-L-homocysteine. The enzyme catalyses adenosine(37) in tRNA + 2 reduced [2Fe-2S]-[ferredoxin] + 2 S-adenosyl-L-methionine = 2-methyladenosine(37) in tRNA + 5'-deoxyadenosine + L-methionine + 2 oxidized [2Fe-2S]-[ferredoxin] + S-adenosyl-L-homocysteine. Functionally, specifically methylates position 2 of adenine 2503 in 23S rRNA and position 2 of adenine 37 in tRNAs. This Caldicellulosiruptor saccharolyticus (strain ATCC 43494 / DSM 8903 / Tp8T 6331) protein is Probable dual-specificity RNA methyltransferase RlmN.